A 34-amino-acid polypeptide reads, in one-letter code: U10-ctenitoxin-Pr1a (34 aa).

Cystine bridges form between cysteine 2/cysteine 15, cysteine 9/cysteine 20, cysteine 14/cysteine 31, and cysteine 22/cysteine 29.

Expressed by the venom gland.

The protein resides in the secreted. Its function is as follows. Non-toxic to mice and insects. This chain is U10-ctenitoxin-Pr1a, found in Phoneutria reidyi (Brazilian Amazonian armed spider).